A 439-amino-acid chain; its full sequence is Large ribosomal subunit protein mL65 (439 aa).

This sequence belongs to the mitochondrion-specific ribosomal protein mL65 family. In terms of assembly, component of the mitochondrial large ribosomal subunit (mt-LSU). Mature mammalian 55S mitochondrial ribosomes consist of a small (28S) and a large (39S) subunit. The 28S small subunit contains a 12S ribosomal RNA (12S mt-rRNA) and 30 different proteins. The 39S large subunit contains a 16S rRNA (16S mt-rRNA), a copy of mitochondrial valine transfer RNA (mt-tRNA(Val)), which plays an integral structural role, and 52 different proteins. mL65 forms a heterodimer with mL37. As to expression, heart, skeletal muscle, kidney and liver. Lower expression in placenta and peripheral blood leukocytes.

The protein resides in the mitochondrion. The chain is Large ribosomal subunit protein mL65 (MRPS30) from Homo sapiens (Human).